The sequence spans 399 residues: E3 ubiquitin-protein ligase APD4 (399 aa).

2 helical membrane passes run 42–62 and 284–304; these read FGIIMGLWFFASVCLIFGVYG and LIAYGSFTGVLLSFMLVAIHF. The segment at 348 to 387 adopts an RING-type zinc-finger fold; that stretch reads CAICFDAPRDCCFLPCGHCVSCYQCGTKIKRTKGRCPICR.

Expressed in the shoot apical meristems (SAM), root tips and inflorescences.

It localises to the endomembrane system. Its subcellular location is the vacuole membrane. It catalyses the reaction S-ubiquitinyl-[E2 ubiquitin-conjugating enzyme]-L-cysteine + [acceptor protein]-L-lysine = [E2 ubiquitin-conjugating enzyme]-L-cysteine + N(6)-ubiquitinyl-[acceptor protein]-L-lysine.. Its pathway is protein modification; protein ubiquitination. Involved in pollen mitosis II (PMII) regulation during male gametogenesis. The sequence is that of E3 ubiquitin-protein ligase APD4 from Arabidopsis thaliana (Mouse-ear cress).